We begin with the raw amino-acid sequence, 388 residues long: Succinate--CoA ligase [ADP-forming] subunit beta (388 aa).

The ATP-grasp domain maps to 9 to 244; sequence KQLFARYGLP…QSQEDPREAQ (236 aa). Residues Lys-46, 53–55, Glu-99, Thr-102, and Glu-107 each bind ATP; that span reads GRG. 2 residues coordinate Mg(2+): Asn-199 and Asp-213. Residues Asn-264 and 321 to 323 contribute to the substrate site; that span reads GIV.

The protein belongs to the succinate/malate CoA ligase beta subunit family. Heterotetramer of two alpha and two beta subunits. Mg(2+) is required as a cofactor.

It catalyses the reaction succinate + ATP + CoA = succinyl-CoA + ADP + phosphate. The catalysed reaction is GTP + succinate + CoA = succinyl-CoA + GDP + phosphate. It functions in the pathway carbohydrate metabolism; tricarboxylic acid cycle; succinate from succinyl-CoA (ligase route): step 1/1. Succinyl-CoA synthetase functions in the citric acid cycle (TCA), coupling the hydrolysis of succinyl-CoA to the synthesis of either ATP or GTP and thus represents the only step of substrate-level phosphorylation in the TCA. The beta subunit provides nucleotide specificity of the enzyme and binds the substrate succinate, while the binding sites for coenzyme A and phosphate are found in the alpha subunit. This is Succinate--CoA ligase [ADP-forming] subunit beta from Salmonella dublin (strain CT_02021853).